The sequence spans 213 residues: Nicotinate-nucleotide adenylyltransferase (213 aa).

Belongs to the NadD family.

The catalysed reaction is nicotinate beta-D-ribonucleotide + ATP + H(+) = deamido-NAD(+) + diphosphate. Its pathway is cofactor biosynthesis; NAD(+) biosynthesis; deamido-NAD(+) from nicotinate D-ribonucleotide: step 1/1. Functionally, catalyzes the reversible adenylation of nicotinate mononucleotide (NaMN) to nicotinic acid adenine dinucleotide (NaAD). The chain is Nicotinate-nucleotide adenylyltransferase from Salmonella typhi.